A 253-amino-acid polypeptide reads, in one-letter code: 5'/3'-nucleotidase SurE (253 aa).

4 residues coordinate a divalent metal cation: aspartate 8, aspartate 9, serine 39, and asparagine 92.

It belongs to the SurE nucleotidase family. A divalent metal cation is required as a cofactor.

The protein resides in the cytoplasm. It catalyses the reaction a ribonucleoside 5'-phosphate + H2O = a ribonucleoside + phosphate. The catalysed reaction is a ribonucleoside 3'-phosphate + H2O = a ribonucleoside + phosphate. It carries out the reaction [phosphate](n) + H2O = [phosphate](n-1) + phosphate + H(+). Nucleotidase with a broad substrate specificity as it can dephosphorylate various ribo- and deoxyribonucleoside 5'-monophosphates and ribonucleoside 3'-monophosphates with highest affinity to 3'-AMP. Also hydrolyzes polyphosphate (exopolyphosphatase activity) with the preference for short-chain-length substrates (P20-25). Might be involved in the regulation of dNTP and NTP pools, and in the turnover of 3'-mononucleotides produced by numerous intracellular RNases (T1, T2, and F) during the degradation of various RNAs. In Serratia proteamaculans (strain 568), this protein is 5'/3'-nucleotidase SurE.